The sequence spans 450 residues: Probable rhamnogalacturonase E (450 aa).

Positions 1 to 22 (MTWSTSFLSVHFFAFITTSIHA) are cleaved as a signal peptide. A disulfide bridge connects residues cysteine 43 and cysteine 69. 3 N-linked (GlcNAc...) asparagine glycosylation sites follow: asparagine 54, asparagine 92, and asparagine 131. Aspartate 222 (proton donor) is an active-site residue. Cysteines 224 and 241 form a disulfide. Residues asparagine 242 and asparagine 257 are each glycosylated (N-linked (GlcNAc...) asparagine). Histidine 297 is an active-site residue. Asparagine 324 and asparagine 329 each carry an N-linked (GlcNAc...) asparagine glycan. 2 disulfide bridges follow: cysteine 347/cysteine 353 and cysteine 375/cysteine 384.

The protein belongs to the glycosyl hydrolase 28 family.

The protein localises to the secreted. In terms of biological role, pectinolytic enzymes consist of four classes of enzymes: pectine lyase, polygalacturonase, pectin methylesterase and rhamnogalacturonase. Hydrolyzes alpha-D-galacturonopyranosyl-(1,2)-alpha-L-rhamnopyranosyl linkages in the backbone of the hairy regions of pectins. This Aspergillus niger protein is Probable rhamnogalacturonase E (rhgE).